Reading from the N-terminus, the 246-residue chain is Bis(5'-nucleosyl)-tetraphosphatase PrpE [asymmetrical] (246 aa).

The protein belongs to the PrpE family. Requires Ni(2+) as cofactor.

It catalyses the reaction P(1),P(4)-bis(5'-guanosyl) tetraphosphate + H2O = GMP + GTP + 2 H(+). Functionally, asymmetrically hydrolyzes Ap4p to yield AMP and ATP. In Halalkalibacterium halodurans (strain ATCC BAA-125 / DSM 18197 / FERM 7344 / JCM 9153 / C-125) (Bacillus halodurans), this protein is Bis(5'-nucleosyl)-tetraphosphatase PrpE [asymmetrical].